The primary structure comprises 278 residues: Envelope glycoprotein L (278 aa).

A signal peptide spans 1 to 32 (MCRRPDCGFSFSPGPVILLWCCLLLSIVSSAA). A gL betaherpesvirus-type domain is found at 43–256 (VPAECPELTR…DKYYAGLPPE (214 aa)). Cysteines 154 and 159 form a disulfide.

Belongs to the herpesviridae glycoprotein L (gL) family. Betaherpesvirinae gL subfamily. Interacts with glycoprotein H (gH); this interaction is necessary for the correct processing and cell surface expression of gH. Forms the envelope pentamer complex (PC) composed of gH, gL, UL128, UL130, and UL131A. The pentamer interacts with host NRP2. Forms the envelope trimer complex composed of gH, gL, and gO. The trimer interacts with host PDGFRA. The trimer also interacts with host EPHA2.

The protein resides in the virion membrane. Its subcellular location is the host cell membrane. The protein localises to the host Golgi apparatus. It localises to the host trans-Golgi network. Functionally, the heterodimer glycoprotein H-glycoprotein L is required for the fusion of viral and plasma membranes leading to virus entry into the host cell. Acts as a functional inhibitor of gH and maintains gH in an inhibited form. Upon binding to host integrins, gL dissociates from gH leading to activation of the viral fusion glycoproteins gB and gH. In human cytomegalovirus, forms two distincts complexes to mediate viral entry, a trimer and a pentamer at the surface of the virion envelope. The gH-gL-gO trimer is required for infection in fibroblasts by interacting with host PDGFRA, and in glioblastoma cells by interacting with host EPHA2. The gH-gL-UL128-UL130-UL131A pentamer is essential for viral entry in epithelial, endothelial and myeloid cells via interaction with host NRP2. This is Envelope glycoprotein L from Human cytomegalovirus (strain 119) (HHV-5).